The sequence spans 433 residues: UDP-N-acetylglucosamine 1-carboxyvinyltransferase 2 (433 aa).

23–24 serves as a coordination point for phosphoenolpyruvate; the sequence is KN. Arginine 96 serves as a coordination point for UDP-N-acetyl-alpha-D-glucosamine. The active-site Proton donor is the cysteine 120. Cysteine 120 is modified (2-(S-cysteinyl)pyruvic acid O-phosphothioketal). UDP-N-acetyl-alpha-D-glucosamine contacts are provided by residues 125–129, aspartate 308, and valine 330; that span reads RPIDL.

Belongs to the EPSP synthase family. MurA subfamily.

It is found in the cytoplasm. It catalyses the reaction phosphoenolpyruvate + UDP-N-acetyl-alpha-D-glucosamine = UDP-N-acetyl-3-O-(1-carboxyvinyl)-alpha-D-glucosamine + phosphate. Its pathway is cell wall biogenesis; peptidoglycan biosynthesis. Functionally, cell wall formation. Adds enolpyruvyl to UDP-N-acetylglucosamine. This Enterococcus faecalis (strain ATCC 700802 / V583) protein is UDP-N-acetylglucosamine 1-carboxyvinyltransferase 2.